The primary structure comprises 278 residues: Tryptophan 2,3-dioxygenase (278 aa).

Substrate-binding positions include 47–51 (FIVQH), tyrosine 109, and arginine 113. Histidine 236 is a heme binding site. Threonine 250 provides a ligand contact to substrate.

It belongs to the tryptophan 2,3-dioxygenase family. In terms of assembly, homotetramer. Heme serves as cofactor.

The enzyme catalyses L-tryptophan + O2 = N-formyl-L-kynurenine. Its pathway is amino-acid degradation; L-tryptophan degradation via kynurenine pathway; L-kynurenine from L-tryptophan: step 1/2. Functionally, heme-dependent dioxygenase that catalyzes the oxidative cleavage of the L-tryptophan (L-Trp) pyrrole ring and converts L-tryptophan to N-formyl-L-kynurenine. Catalyzes the oxidative cleavage of the indole moiety. In Ralstonia pickettii (strain 12J), this protein is Tryptophan 2,3-dioxygenase.